Here is a 532-residue protein sequence, read N- to C-terminus: Autoinducer-2 kinase (532 aa).

This sequence belongs to the FGGY kinase family.

It is found in the cytoplasm. It carries out the reaction (S)-4,5-dihydroxypentane-2,3-dione + ATP = (2S)-2-hydroxy-3,4-dioxopentyl phosphate + ADP + H(+). Its function is as follows. Catalyzes the phosphorylation of autoinducer-2 (AI-2) to phospho-AI-2, which subsequently inactivates the transcriptional regulator LsrR and leads to the transcription of the lsr operon. Phosphorylates the ring-open form of (S)-4,5-dihydroxypentane-2,3-dione (DPD), which is the precursor to all AI-2 signaling molecules, at the C5 position. The chain is Autoinducer-2 kinase from Klebsiella pneumoniae subsp. pneumoniae (strain ATCC 700721 / MGH 78578).